Here is a 592-residue protein sequence, read N- to C-terminus: Aspartate--tRNA(Asp/Asn) ligase (592 aa).

Position 172 (E172) interacts with L-aspartate. The aspartate stretch occupies residues 196–199; sequence QLFK. An L-aspartate-binding site is contributed by R218. Residues 218-220 and Q227 contribute to the ATP site; that span reads RDE. H442 contacts L-aspartate. E476 is an ATP binding site. R483 is an L-aspartate binding site. 528–531 serves as a coordination point for ATP; the sequence is GWDR. The interval 553–592 is disordered; the sequence is SGTDPLTGAPTPITPEQRKEAGIDADPYAAAGRPPGRQSA.

It belongs to the class-II aminoacyl-tRNA synthetase family. Type 1 subfamily. As to quaternary structure, homodimer.

It is found in the cytoplasm. The catalysed reaction is tRNA(Asx) + L-aspartate + ATP = L-aspartyl-tRNA(Asx) + AMP + diphosphate. Aspartyl-tRNA synthetase with relaxed tRNA specificity since it is able to aspartylate not only its cognate tRNA(Asp) but also tRNA(Asn). Reaction proceeds in two steps: L-aspartate is first activated by ATP to form Asp-AMP and then transferred to the acceptor end of tRNA(Asp/Asn). This Acidothermus cellulolyticus (strain ATCC 43068 / DSM 8971 / 11B) protein is Aspartate--tRNA(Asp/Asn) ligase.